The primary structure comprises 337 residues: Terpene synthase 4 (337 aa).

2 residues coordinate Mg(2+): Asp94 and Asp98. The D(D/E)XX(D/E) motif signature appears at 94 to 98 (DDIFD). Arg195 is a binding site for substrate. Mg(2+)-binding residues include Asn241, Ser245, and Glu249. An NSE motif motif is present at residues 241 to 249 (NDIYSYHRE). A WxxxxxRY motif motif is present at residues 320–327 (WSESCTRY).

Belongs to the terpene synthase family. Mg(2+) is required as a cofactor.

It catalyses the reaction (2E,6E)-farnesyl diphosphate = alpha-muurolene + diphosphate. The enzyme catalyses (2E,6E)-farnesyl diphosphate = (-)-(E)-beta-caryophyllene + diphosphate. Its function is as follows. Terpene synthase that catalyzes the cyclization of farnesyl diphosphate (FPP) into alpha-muurolene, (-)-beta-caryophyllene, and one unidentified sesquiterpene. TPS4 shows only trace monoterpene synthase activity with geranyl diphosphate (GPP) as substrate and produces very small amounts of myrcene. P.polycephalum has a unique biology and these volatile terpenoids could function in internal communication of P.polycephalum, to mark the territory that have been explored, or they may be involved in chemotaxis. This Physarum polycephalum (Slime mold) protein is Terpene synthase 4.